The chain runs to 83 residues: Small ribosomal subunit protein bS16 (83 aa).

The protein belongs to the bacterial ribosomal protein bS16 family.

This chain is Small ribosomal subunit protein bS16, found in Cupriavidus taiwanensis (strain DSM 17343 / BCRC 17206 / CCUG 44338 / CIP 107171 / LMG 19424 / R1) (Ralstonia taiwanensis (strain LMG 19424)).